Reading from the N-terminus, the 239-residue chain is LRRN4 C-terminal-like protein (239 aa).

An N-terminal signal peptide occupies residues 1-19 (MLGSLSLLWLAAMTTSLVS). At 20–194 (QPQILTLEDY…KFIMPPKPVT (175 aa)) the chain is on the extracellular side. Residues 82–179 (QPEPPRLGEV…EGPENWTGPS (98 aa)) enclose the Fibronectin type-III domain. Asn132 and Asn174 each carry an N-linked (GlcNAc...) asparagine glycan. A helical membrane pass occupies residues 195-215 (LVYAAVGVGTALALLSCAALV). Topologically, residues 216–239 (WHFCLRERWGCPRRQGMAQASEAL) are cytoplasmic.

The protein resides in the membrane. In Mus musculus (Mouse), this protein is LRRN4 C-terminal-like protein (Lrrn4cl).